Reading from the N-terminus, the 671-residue chain is Replication protein A 70 kDa DNA-binding subunit (671 aa).

Disordered stretches follow at residues 143–166 and 190–219; these read QVSQ…PAVN and MNKT…LQIS. Low complexity predominate over residues 199 to 213; that stretch reads NNNNNNNNNGNNKNN. The segment at residues 240 to 322 is a DNA-binding region (OB); sequence QTIKVRITKK…NKGDHTVTVN (83 aa). The C4-type zinc-finger motif lies at 530–549; the sequence is CFSCKKKIARNNEVWTCINC.

It belongs to the replication factor A protein 1 family. As to quaternary structure, component of the replication protein A complex (RPA), a heterotrimeric complex composed of RPA1, RPA2/TEB2 and RPA3/TEB3.

As part of the heterotrimeric replication protein A (RPA) complex, binds and stabilizes single-stranded DNA intermediates, that form during DNA replication or upon DNA stress. It prevents their reannealing and in parallel, recruits and activates different proteins and complexes involved in DNA metabolism. Thereby, it plays an essential role both in DNA replication and the cellular response to DNA damage. In the cellular response to DNA damage, the RPA complex controls DNA repair and DNA damage checkpoint activation. The chain is Replication protein A 70 kDa DNA-binding subunit from Tetrahymena thermophila (strain SB210).